The sequence spans 360 residues: Phenylalanine--tRNA ligase alpha subunit (360 aa).

A Mg(2+)-binding site is contributed by E260.

This sequence belongs to the class-II aminoacyl-tRNA synthetase family. Phe-tRNA synthetase alpha subunit type 1 subfamily. In terms of assembly, tetramer of two alpha and two beta subunits. The cofactor is Mg(2+).

It localises to the cytoplasm. The enzyme catalyses tRNA(Phe) + L-phenylalanine + ATP = L-phenylalanyl-tRNA(Phe) + AMP + diphosphate + H(+). In Rhizobium etli (strain CIAT 652), this protein is Phenylalanine--tRNA ligase alpha subunit.